The primary structure comprises 33 residues: Cytochrome b6-f complex subunit 8 (33 aa).

The helical transmembrane segment at 2-22 (LFTFAWASLAAIFTFSIAMVV) threads the bilayer.

This sequence belongs to the PetN family. In terms of assembly, the 4 large subunits of the cytochrome b6-f complex are cytochrome b6, subunit IV (17 kDa polypeptide, PetD), cytochrome f and the Rieske protein, while the 4 small subunits are PetG, PetL, PetM and PetN. The complex functions as a dimer.

Its subcellular location is the cellular thylakoid membrane. In terms of biological role, component of the cytochrome b6-f complex, which mediates electron transfer between photosystem II (PSII) and photosystem I (PSI), cyclic electron flow around PSI, and state transitions. The sequence is that of Cytochrome b6-f complex subunit 8 from Prochlorococcus marinus (strain SARG / CCMP1375 / SS120).